The sequence spans 288 residues: Fructose-bisphosphate aldolase (288 aa).

Residue Ser-49 coordinates D-glyceraldehyde 3-phosphate. Asp-84 serves as the catalytic Proton donor. His-85, Asp-105, Glu-135, and His-177 together coordinate Zn(2+). Gly-178 contributes to the dihydroxyacetone phosphate binding site. Position 206 (His-206) interacts with Zn(2+). Residues 207–209 and 228–231 contribute to the dihydroxyacetone phosphate site; these read GGS and NINT.

It belongs to the class II fructose-bisphosphate aldolase family. As to quaternary structure, homodimer. The cofactor is Zn(2+).

The catalysed reaction is beta-D-fructose 1,6-bisphosphate = D-glyceraldehyde 3-phosphate + dihydroxyacetone phosphate. It participates in carbohydrate degradation; glycolysis; D-glyceraldehyde 3-phosphate and glycerone phosphate from D-glucose: step 4/4. Functionally, catalyzes the aldol condensation of dihydroxyacetone phosphate (DHAP or glycerone-phosphate) with glyceraldehyde 3-phosphate (G3P) to form fructose 1,6-bisphosphate (FBP) in gluconeogenesis and the reverse reaction in glycolysis. The protein is Fructose-bisphosphate aldolase (fba) of Mycoplasma pneumoniae (strain ATCC 29342 / M129 / Subtype 1) (Mycoplasmoides pneumoniae).